The chain runs to 333 residues: O-acetyl transferase (333 aa).

It belongs to the acyltransferase 3 family.

The protein resides in the host cell inner membrane. In terms of biological role, antigenically converts S.flexneri serotype X to 3a, Y to 3b, 1a to 1b and 4a to 4b by O-acetylating the O-antigenic polysaccharide chain. The protein is O-acetyl transferase (OAC) of Shigella flexneri (Shigella flexneri bacteriophage VI).